The following is a 554-amino-acid chain: CTP synthase (554 aa).

The tract at residues 1 to 265 (MTPLIFVTGG…DEIVIDQFKL (265 aa)) is amidoligase domain. Serine 13 serves as a coordination point for CTP. Serine 13 lines the UTP pocket. ATP contacts are provided by residues 14–19 (SLGKGI) and aspartate 71. Mg(2+) contacts are provided by aspartate 71 and glutamate 139. CTP is bound by residues 146–148 (DIE), 186–191 (KTKPTQ), and lysine 222. UTP is bound by residues 186–191 (KTKPTQ) and lysine 222. The 254-residue stretch at 292–545 (TIAVVGKYVD…VKASRARKAG (254 aa)) folds into the Glutamine amidotransferase type-1 domain. Glycine 353 contacts L-glutamine. Residue cysteine 380 is the Nucleophile; for glutamine hydrolysis of the active site. Residues 381–384 (YGMQ), glutamate 404, and arginine 471 each bind L-glutamine. Active-site residues include histidine 518 and glutamate 520.

Belongs to the CTP synthase family. In terms of assembly, homotetramer.

The catalysed reaction is UTP + L-glutamine + ATP + H2O = CTP + L-glutamate + ADP + phosphate + 2 H(+). It carries out the reaction L-glutamine + H2O = L-glutamate + NH4(+). It catalyses the reaction UTP + NH4(+) + ATP = CTP + ADP + phosphate + 2 H(+). It functions in the pathway pyrimidine metabolism; CTP biosynthesis via de novo pathway; CTP from UDP: step 2/2. Its activity is regulated as follows. Allosterically activated by GTP, when glutamine is the substrate; GTP has no effect on the reaction when ammonia is the substrate. The allosteric effector GTP functions by stabilizing the protein conformation that binds the tetrahedral intermediate(s) formed during glutamine hydrolysis. Inhibited by the product CTP, via allosteric rather than competitive inhibition. In terms of biological role, catalyzes the ATP-dependent amination of UTP to CTP with either L-glutamine or ammonia as the source of nitrogen. Regulates intracellular CTP levels through interactions with the four ribonucleotide triphosphates. The protein is CTP synthase of Xylella fastidiosa (strain M12).